The following is a 62-amino-acid chain: Photosystem II reaction center protein Z (62 aa).

The next 2 membrane-spanning stretches (helical) occupy residues alanine 8 to alanine 28 and phenylalanine 41 to isoleucine 61.

It belongs to the PsbZ family. In terms of assembly, PSII is composed of 1 copy each of membrane proteins PsbA, PsbB, PsbC, PsbD, PsbE, PsbF, PsbH, PsbI, PsbJ, PsbK, PsbL, PsbM, PsbT, PsbY, PsbZ, Psb30/Ycf12, at least 3 peripheral proteins of the oxygen-evolving complex and a large number of cofactors. It forms dimeric complexes.

The protein resides in the plastid. It is found in the chloroplast thylakoid membrane. Functionally, may control the interaction of photosystem II (PSII) cores with the light-harvesting antenna, regulates electron flow through the 2 photosystem reaction centers. PSII is a light-driven water plastoquinone oxidoreductase, using light energy to abstract electrons from H(2)O, generating a proton gradient subsequently used for ATP formation. This Phalaenopsis aphrodite subsp. formosana (Moth orchid) protein is Photosystem II reaction center protein Z.